The following is a 328-amino-acid chain: Carbonic anhydrase-related protein 11 (328 aa).

A signal peptide spans 1–23; sequence MGAAARLSAPRALVLWAALGAAA. The Alpha-carbonic anhydrase domain maps to 33 to 303; that stretch reads DWWSYKDNLQ…LAHRALRGNR (271 aa). N-linked (GlcNAc...) asparagine glycosylation is found at N118, N170, and N260. The tract at residues 299-328 is disordered; the sequence is LRGNRDPRHPERRCRGPNYRLHVDGAPHGR. Basic and acidic residues predominate over residues 319 to 328; sequence LHVDGAPHGR.

The protein belongs to the alpha-carbonic anhydrase family.

The protein localises to the secreted. Does not have a catalytic activity. The polypeptide is Carbonic anhydrase-related protein 11 (CA11) (Pongo abelii (Sumatran orangutan)).